A 193-amino-acid chain; its full sequence is Crossover junction endodeoxyribonuclease RuvC (193 aa).

Residues D7, E68, and D141 contribute to the active site. Residues D7, E68, and D141 each coordinate Mg(2+).

The protein belongs to the RuvC family. Homodimer which binds Holliday junction (HJ) DNA. The HJ becomes 2-fold symmetrical on binding to RuvC with unstacked arms; it has a different conformation from HJ DNA in complex with RuvA. In the full resolvosome a probable DNA-RuvA(4)-RuvB(12)-RuvC(2) complex forms which resolves the HJ. The cofactor is Mg(2+).

The protein resides in the cytoplasm. It carries out the reaction Endonucleolytic cleavage at a junction such as a reciprocal single-stranded crossover between two homologous DNA duplexes (Holliday junction).. Its function is as follows. The RuvA-RuvB-RuvC complex processes Holliday junction (HJ) DNA during genetic recombination and DNA repair. Endonuclease that resolves HJ intermediates. Cleaves cruciform DNA by making single-stranded nicks across the HJ at symmetrical positions within the homologous arms, yielding a 5'-phosphate and a 3'-hydroxyl group; requires a central core of homology in the junction. The consensus cleavage sequence is 5'-(A/T)TT(C/G)-3'. Cleavage occurs on the 3'-side of the TT dinucleotide at the point of strand exchange. HJ branch migration catalyzed by RuvA-RuvB allows RuvC to scan DNA until it finds its consensus sequence, where it cleaves and resolves the cruciform DNA. The chain is Crossover junction endodeoxyribonuclease RuvC from Renibacterium salmoninarum (strain ATCC 33209 / DSM 20767 / JCM 11484 / NBRC 15589 / NCIMB 2235).